Reading from the N-terminus, the 84-residue chain is RNA-binding protein Hfq (84 aa).

Residues Asp10–Ile69 enclose the Sm domain.

Belongs to the Hfq family. Homohexamer.

Its function is as follows. RNA chaperone that binds small regulatory RNA (sRNAs) and mRNAs to facilitate mRNA translational regulation in response to envelope stress, environmental stress and changes in metabolite concentrations. Also binds with high specificity to tRNAs. The sequence is that of RNA-binding protein Hfq from Nitrosomonas europaea (strain ATCC 19718 / CIP 103999 / KCTC 2705 / NBRC 14298).